Here is a 314-residue protein sequence, read N- to C-terminus: Ketimine reductase mu-crystallin (314 aa).

Arg-47 contacts 3,3',5-triiodo-L-thyronine. Positions 91, 92, 119, 144, 146, 147, 168, 169, 170, 173, 205, 206, and 226 each coordinate NADPH. Glu-257 is a binding site for 3,3',5-triiodo-L-thyronine. An NADPH-binding site is contributed by Ser-292.

Belongs to the ornithine cyclodeaminase/mu-crystallin family. As to quaternary structure, homodimer. Binds the thyroid hormone triiodothyronine (T3); T3 binding inhibits enzymatic activity. As to expression, expressed at high abundance in lens, but outside the lens it is preferentially expressed in neural tissues, retina and brain.

It is found in the cytoplasm. It carries out the reaction L-pipecolate + NADP(+) = Delta(1)-piperideine-2-carboxylate + NADPH + H(+). The enzyme catalyses L-pipecolate + NAD(+) = Delta(1)-piperideine-2-carboxylate + NADH + H(+). The catalysed reaction is L-proline + NADP(+) = 1-pyrroline-2-carboxylate + NADPH + H(+). It catalyses the reaction L-proline + NAD(+) = 1-pyrroline-2-carboxylate + NADH + H(+). It carries out the reaction (3R)-1,4-thiomorpholine-3-carboxylate + NAD(+) = 3,4-dehydrothiomorpholine-3-carboxylate + NADH + 2 H(+). The enzyme catalyses (3R)-1,4-thiomorpholine-3-carboxylate + NADP(+) = 3,4-dehydrothiomorpholine-3-carboxylate + NADPH + 2 H(+). The catalysed reaction is (S)-cystathionine ketimine + NADH + 2 H(+) = (3R,5S)-2,3,5,6,7-pentahydro-1,4-thiazepine-3,5-dicarboxylate + NAD(+). It catalyses the reaction (S)-cystathionine ketimine + NADPH + 2 H(+) = (3R,5S)-2,3,5,6,7-pentahydro-1,4-thiazepine-3,5-dicarboxylate + NADP(+). It carries out the reaction (R)-lanthionine ketimine + NADPH + 2 H(+) = (3R,5R)-1,4-thiomorpholine-3,5-dicarboxylate + NADP(+). The enzyme catalyses Delta(2)-thiazoline-2-carboxylate + NADPH + 2 H(+) = L-thiazolidine-2-carboxylate + NADP(+). Catalyzes the NAD(P)H-dependent reduction of imine double bonds of a number of cyclic ketimine substrates, including sulfur-containing cyclic ketimines. Under physiological conditions, it efficiently catalyzes delta(1)-piperideine-2-carboxylate (P2C) and delta(1)-pyrroline-2-carboxylate (Pyr2C) reduction, suggesting a central role in lysine and glutamate metabolism. Additional substrates are delta(2)-thiazoline-2-carboxylate (T2C), 3,4-dehydrothiomorpholine-3-carboxylate (AECK), and (R)-lanthionine ketimine (LK) that is reduced at very low rate compared to other substrates. Also catalyzes the NAD(P)H-dependent reduction of (S)-cystathionine ketimine (CysK). In Macropus fuliginosus (Western gray kangaroo), this protein is Ketimine reductase mu-crystallin (CRYM).